The primary structure comprises 354 residues: Stearoyl-CoA desaturase (354 aa).

The segment at 1-28 is disordered; sequence MPGHLLQEEMTSSYTTTTTTITEPPSES. Residues 1 to 67 lie on the Cytoplasmic side of the membrane; it reads MPGHLLQEEM…EGPPPKLEYV (67 aa). Residues 8 to 28 show a composition bias toward low complexity; that stretch reads EEMTSSYTTTTTTITEPPSES. The helical transmembrane segment at 68–88 threads the bilayer; that stretch reads WRNIILMALLHLGALYGLVLV. Asn-70 provides a ligand contact to substrate. The Lumenal segment spans residues 89-92; that stretch reads PSSK. Residues 93–113 form a helical membrane-spanning segment; sequence VYTLLWAFVYYVISIEGIGAG. Topologically, residues 114–212 are cytoplasmic; that stretch reads VHRLWSHRTY…EKLVMFQRRY (99 aa). The Fe cation site is built by His-115 and His-120. A Histidine box-1 motif is present at residues 115–120; sequence HRLWSH. Residues Asn-143, Arg-150, and Asp-151 each coordinate substrate. Positions 152, 155, and 156 each coordinate Fe cation. The Histidine box-2 signature appears at 152 to 156; the sequence is HRAHH. Substrate-binding residues include Arg-183 and Lys-184. Ser-198 carries the post-translational modification Phosphoserine. A helical transmembrane segment spans residues 213–232; that stretch reads YKPAILLMCFILPTFVPWYF. Topologically, residues 233 to 236 are lumenal; the sequence is WGEA. The chain crosses the membrane as a helical span at residues 237-258; the sequence is FVNSLCVSTFLRYTLVLNATWL. Residue Trp-257 participates in substrate binding. The Cytoplasmic portion of the chain corresponds to 259 to 354; that stretch reads VNSAAHLYGY…RTGDGSCKSG (96 aa). His-264, His-293, His-296, and His-297 together coordinate Fe cation. Positions 293–297 match the Histidine box-3 motif; it reads HNYHH.

The protein belongs to the fatty acid desaturase type 1 family. It depends on Fe(2+) as a cofactor.

It is found in the endoplasmic reticulum membrane. The catalysed reaction is octadecanoyl-CoA + 2 Fe(II)-[cytochrome b5] + O2 + 2 H(+) = (9Z)-octadecenoyl-CoA + 2 Fe(III)-[cytochrome b5] + 2 H2O. It catalyses the reaction hexadecanoyl-CoA + 2 Fe(II)-[cytochrome b5] + O2 + 2 H(+) = (9Z)-hexadecenoyl-CoA + 2 Fe(III)-[cytochrome b5] + 2 H2O. In terms of biological role, stearoyl-CoA desaturase that utilizes O(2) and electrons from reduced cytochrome b5 to introduce the first double bond into saturated fatty acyl-CoA substrates. Catalyzes the insertion of a cis double bond at the delta-9 position into fatty acyl-CoA substrates including palmitoyl-CoA and stearoyl-CoA. Gives rise to a mixture of 16:1 and 18:1 unsaturated fatty acids. Plays an important role in lipid biosynthesis. Plays an important role in regulating the expression of genes that are involved in lipogenesis and in regulating mitochondrial fatty acid oxidation. Plays an important role in body energy homeostasis. Contributes to the biosynthesis of membrane phospholipids, cholesterol esters and triglycerides. This Mesocricetus auratus (Golden hamster) protein is Stearoyl-CoA desaturase (SCD).